We begin with the raw amino-acid sequence, 23 residues long: Coenzyme PQQ synthesis protein A (23 aa).

A cross-link (pyrroloquinoline quinone (Glu-Tyr)) is located at residues 15–19; it reads EVTLY.

This sequence belongs to the PqqA family.

The protein operates within cofactor biosynthesis; pyrroloquinoline quinone biosynthesis. Functionally, required for coenzyme pyrroloquinoline quinone (PQQ) biosynthesis. PQQ is probably formed by cross-linking a specific glutamate to a specific tyrosine residue and excising these residues from the peptide. This is Coenzyme PQQ synthesis protein A from Colwellia psychrerythraea (strain 34H / ATCC BAA-681) (Vibrio psychroerythus).